The sequence spans 426 residues: MSGGVYGGDEVGALVFDIGSFSVRAGYAGEDCPKADFPTTVGLLAAEEGGGLELEGDKEKKGKIFHIDTNALHVPRDGAEVMSPLKNGMIEDWECFRAILDHTYSKHVKSEPNLHPVLMSEAPWNTRAKREKLTELMFEQYNIPAFFLCKTAVLTAFANGRSTGLVLDSGATHTTAIPVHDGYVLQQGIVKSPLAGDFISMQCRELFQEMAIDIIPPYMIAAKEPVREGAPPNWKKKEKLPQVSKSWHNYMCNEVIQDFQASVLQVSDSPYDEQVAAQMPTVHYEMPNGYNTDYGAERLRIPEGLFDPSNVKGLSGNTMLGVGHVVTTSIGMCDIDIRPGLYGSVIVTGGNTLLQGFTDRLNRELSQKTPPSMRLKLIASNSTMERKFSPWIGGSILASLGTFQQMWISKQEYEEGGKQCVERKCP.

An essential for mediating its function in dendritic development; may contribute to neuronal-specific targeting region spans residues 39–82 (TTVGLLAAEEGGGLELEGDKEKKGKIFHIDTNALHVPRDGAEVM).

It belongs to the actin family. Component of the multiprotein chromatin-remodeling complexes SWI/SNF: SWI/SNF-A (BAF), SWI/SNF-B (PBAF) and related complexes. The canonical complex contains a catalytic subunit (either SMARCA4/BRG1/BAF190A or SMARCA2/BRM/BAF190B) and at least SMARCE1, ACTL6A/BAF53, SMARCC1/BAF155, SMARCC2/BAF170 and SMARCB1/SNF5/BAF47. Other subunits specific to each of the complexes may also be present permitting several possible combinations developmentally and tissue specific. Component of the BAF complex, which includes at least actin (ACTB), ARID1A/BAF250A, ARID1B/BAF250B, SMARCA2/BRM, SMARCA4/BRG1/BAF190A, ACTL6A/BAF53, ACTL6B/BAF53B, SMARCE1/BAF57, SMARCC1/BAF155, SMARCC2/BAF170, SMARCB1/SNF5/INI1 and one or more SMARCD1/BAF60A, SMARCD2/BAF60B, or SMARCD3/BAF60C. Component of neuron-specific chromatin remodeling complex (nBAF complex) composed of at least, ARID1A/BAF250A or ARID1B/BAF250B, SMARCD1/BAF60A or SMARCD2/BAF60B or SMARCD3/BAF60C, SMARCA2/BRM/BAF190B, SMARCA4/BRG1/BAF190A, SMARCB1/BAF47, SMARCC1/BAF155, SMARCE1/BAF57, SMARCC2/BAF170, DPF1/BAF45B, DPF3/BAF45C, ACTL6B/BAF53B and actin (ACTB). Note that the nBAF complex is polymorphic in regard to the ATPase, SMARCA2 and SMARCA4 occupying mutually exclusive positions. May be a component of the SWI/SNF-B (PBAF) chromatin remodeling complex, at least composed of SMARCA4/BRG1, SMARCB1/BAF47/SNF5, ACTL6A/BAF53A or ACTL6B/BAF53B, SMARCE1/BAF57, SMARCD1/BAF60A, SMARCD2/BAF60B, perhaps SMARCD3/BAF60C, SMARCC1/BAF155, SMARCC2/BAF170, PBRM1/BAF180, ARID2/BAF200 and actin.

The protein resides in the nucleus. Functionally, involved in transcriptional activation and repression of select genes by chromatin remodeling (alteration of DNA-nucleosome topology). Component of SWI/SNF chromatin remodeling complexes that carry out key enzymatic activities, changing chromatin structure by altering DNA-histone contacts within a nucleosome in an ATP-dependent manner. Belongs to the neuron-specific chromatin remodeling complex (nBAF complex), as such plays a role in remodeling mononucleosomes in an ATP-dependent fashion, and is required for postmitotic neural development and dendritic outgrowth. During neural development a switch from a stem/progenitor to a postmitotic chromatin remodeling mechanism occurs as neurons exit the cell cycle and become committed to their adult state. The transition from proliferating neural stem/progenitor cells to postmitotic neurons requires a switch in subunit composition of the npBAF and nBAF complexes. As neural progenitors exit mitosis and differentiate into neurons, npBAF complexes which contain ACTL6A/BAF53A and PHF10/BAF45A, are exchanged for homologous alternative ACTL6B/BAF53B and DPF1/BAF45B or DPF3/BAF45C subunits in neuron-specific complexes (nBAF). The npBAF complex is essential for the self-renewal/proliferative capacity of the multipotent neural stem cells. The nBAF complex along with CREST plays a role regulating the activity of genes essential for dendrite growth. ACTL6B/BAF53B is not essential for assembly of the nBAF complex but is required for targeting the complex and CREST to the promoter of genes essential for dendritic growth. Essential for neuronal maturation and dendrite development. This Homo sapiens (Human) protein is Actin-like protein 6B.